The primary structure comprises 1103 residues: MSTPKAEPVPIPGPRGVPLMGNILDIESEIPLRSLEMMADTYGPIYRLTTFGFSRCMISSHELAAEVFDEERFTKKIMAGLSELRHGIHDGLFTAHMGEENWEIAHRVLMPAFGPLNIQNMFDEMHDIATQLVMKWARQGPKQKIMVTDDFTRLTLDTIALCAMGTRFNSFYSEEMHPFVDAMVGMLKTAGDRSRRPGLVNNLPTTENNKYWEDIDYLRNLCKELVDTRKKNPTDKKDLLNALINGRDPKTGKGMSYDSIIDNMITFLIAGHETTSGSLSFAFYNMLKNPQAYQKAQEEVDRVIGRRRITVEDLQKLPYITAVMRETLRLTPTAPAIAVGPHPTKNHEDPVTLGNGKYVLGKDEPCALLLGKIQRDPKVYGPDAEEFKPERMLDEHFNKLPKHAWKPFGNGMRACIGRPFAWQEALLVIAMLLQNFNFQMDDPSYNIQLKQTLTIKPNHFYMRAALREGLDAVHLGSALSASSSEHADHAAGHGKAGAAKKGADLKPMHVYYGSNTGTCEAFARRLADDATSYGYSAEVESLDSAKDSIPKNGPVVFITASYEGQPPDNAAHFFEWLSALKGDKPLDGVNYAVFGCGHHDWQTTFYRIPKEVNRLVGENGANRLCEIGLADTANADIVTDFDTWGETSFWPAVAAKFGSNTQGSQKSSTFRVEVSSGHRATTLGLQLQEGLVVENTLLTQAGVPAKRTIRFKLPTDTQYKCGDYLAILPVNPSTVVRKVMSRFDLPWDAVLRIEKASPSSSKHISIPMDTQVSAYDLFATYVELSQPASKRDLAVLADAAAVDPETQAELQAIASDPARFAEISQKRISVLDLLLQYPSINLAIGDFVAMLPPMRVRQYSISSSPLVDPTECSITFSVLKAPSLAALTKEDEYLGVASTYLSELRSGERVQLSVRPSHTGFKPPTELSTPMIMACAGSGLAPFRGFVMDRAEKIRGRRSSGSMPEQPAKAILYAGCRTQGKDDIHADELAEWEKIGAVEVRRAYSRPSDGSKGTHVQDLMMEDKKELIDLFESGARIYVCGTPGVGNAVRDSIKSMFLERREEIRRIAKEKGEPVSDDDEETAFEKFLDDMKTKERYTTDIFA.

The interval 1 to 491 (MSTPKAEPVP…SSSEHADHAA (491 aa)) is cytochrome P450. Cysteine 415 provides a ligand contact to heme. The tract at residues 492-1103 (GHGKAGAAKK…KERYTTDIFA (612 aa)) is NADPH--P450 reductase. A Flavodoxin-like domain is found at 508–649 (MHVYYGSNTG…DFDTWGETSF (142 aa)). Residues 514–519 (SNTGTC), 561–564 (SYEG), cysteine 596, and threonine 604 contribute to the FMN site. In terms of domain architecture, FAD-binding FR-type spans 685-924 (LQLQEGLVVE…RPSHTGFKPP (240 aa)).

In the N-terminal section; belongs to the cytochrome P450 family. Requires heme as cofactor. The cofactor is FAD. It depends on FMN as a cofactor.

The enzyme catalyses 2 oxidized [cytochrome P450] + NADPH = 2 reduced [cytochrome P450] + NADP(+) + H(+). It carries out the reaction an organic molecule + reduced [NADPH--hemoprotein reductase] + O2 = an alcohol + oxidized [NADPH--hemoprotein reductase] + H2O + H(+). Its function is as follows. Functions as a fatty acid monooxygenase. Also displays a NADPH-dependent reductase activity in the C-terminal domain, which allows electron transfer from NADPH to the heme iron of the cytochrome P450 N-terminal domain. This Aspergillus oryzae (strain ATCC 42149 / RIB 40) (Yellow koji mold) protein is Bifunctional cytochrome P450/NADPH--P450 reductase.